We begin with the raw amino-acid sequence, 380 residues long: Calreticulin-3 (380 aa).

Residues 1–19 (MVSARALLWAICVLRVALA) form the signal peptide. The interval 20 to 197 (TVYFQEEFLD…GQSIESGSIE (178 aa)) is N-domain. N42 carries N-linked (GlcNAc...) asparagine glycosylation. Positions 109, 111, 128, and 135 each coordinate an alpha-D-glucoside. C137 and C163 form a disulfide bridge. Tandem repeats lie at residues 191-202 (IESGSIEYDWNL), 209-220 (EKTSLDSRDWDQ), 222-231 (EGSKVQDWEK), 235-246 (DAGASKPSDWNS), 250-256 (GDWLQKP), 260-268 (DGLKAEGID), and 270-280 (DVWLHQKMRPA). The 4 X approximate repeats stretch occupies residues 191 to 246 (IESGSIEYDWNLTSLRKTEKTSLDSRDWDQVEGSKVQDWEKHFLDAGASKPSDWNS). The segment at 198 to 291 (YDWNLTSLRK…YLTQYDLSEF (94 aa)) is P-domain. A glycan (N-linked (GlcNAc...) asparagine) is linked at N201. The 3 X approximate repeats stretch occupies residues 250-280 (GDWLQKPPYEDGLKAEGIDKDVWLHQKMRPA). Positions 292–380 (ENIGAIGLEL…FSRFHRQGEL (89 aa)) are C-domain. E300 contacts an alpha-D-glucoside. The Prevents secretion from ER signature appears at 377–380 (QGEL).

The protein belongs to the calreticulin family. Component of an EIF2 complex at least composed of CELF1/CUGBP1, CALR, CALR3, EIF2S1, EIF2S2, HSP90B1 and HSPA5. In terms of tissue distribution, testis specific, absent in mature sperm.

The protein localises to the endoplasmic reticulum lumen. In terms of biological role, CALR3 capacity for calcium-binding may be absent or much lower than that of CALR. During spermatogenesis, may act as a lectin-independent chaperone for specific client proteins such as ADAM3. Required for sperm fertility. This is Calreticulin-3 (Calr3) from Mus musculus (Mouse).